Here is a 221-residue protein sequence, read N- to C-terminus: 5'-nucleotidase (221 aa).

Aspartate 14 functions as the Nucleophile in the catalytic mechanism.

It belongs to the HAD-like hydrolase superfamily. Requires Mn(2+) as cofactor. Mg(2+) serves as cofactor.

The catalysed reaction is a ribonucleoside 5'-phosphate + H2O = a ribonucleoside + phosphate. Specifically dephosphorylates nucleoside 5'-monophosphates to nucleosides and inorganic phosphate. Displays high activity toward 5'-UMP and 5'-IMP, significant activity against 5'-XMP and 5'-TMP, and low activity against 5'-CMP. The polypeptide is 5'-nucleotidase (Pseudomonas aeruginosa (strain ATCC 15692 / DSM 22644 / CIP 104116 / JCM 14847 / LMG 12228 / 1C / PRS 101 / PAO1)).